The primary structure comprises 478 residues: Early growth response protein 4 (478 aa).

A disordered region spans residues 15 to 37 (SKPTEGCAHTSPELPRLPARDAP). 3 C2H2-type zinc fingers span residues 372–396 (FACPVESCVRTFARSDELNRHLRIH), 402–424 (FQCRICLRNFSRSDHLTTHVRTH), and 430–452 (FACDVCGRRFARSDEKKRHSKVH).

The protein belongs to the EGR C2H2-type zinc-finger protein family.

It is found in the nucleus. Transcriptional regulator. Recognizes and binds to the DNA sequence 5'-GCGGGGGCG-3' (GSG). Activates the transcription of target genes whose products are required for mitogenesis and differentiation. In Rattus norvegicus (Rat), this protein is Early growth response protein 4 (Egr4).